The following is a 241-amino-acid chain: Large ribosomal subunit protein uL3 (241 aa).

Disordered regions lie at residues 139–166 (VSHRSIGSTGGRQDPGKTFKNKKMPGHM) and 209–241 (KKPLPKDAPKPGKFKVAGDDKVTADAPTEKEGA). At Gln151 the chain carries N5-methylglutamine.

This sequence belongs to the universal ribosomal protein uL3 family. In terms of assembly, part of the 50S ribosomal subunit. Forms a cluster with proteins L14 and L19. Methylated by PrmB.

In terms of biological role, one of the primary rRNA binding proteins, it binds directly near the 3'-end of the 23S rRNA, where it nucleates assembly of the 50S subunit. The polypeptide is Large ribosomal subunit protein uL3 (Nitrobacter hamburgensis (strain DSM 10229 / NCIMB 13809 / X14)).